The primary structure comprises 533 residues: Di/tripeptide-binding protein 4 (533 aa).

The N-terminal stretch at 1–25 (MLHPLLRHLPLALALALCAAGAAQA) is a signal peptide.

This sequence belongs to the bacterial solute-binding protein 5 family. As to quaternary structure, the complex is composed of two ATP-binding proteins (DppD and DppF), two transmembrane proteins (DppB and DppC) and a solute-binding protein (DppA4). Five orthologous SBPs (DppA1-A5) are present in P.aeruginosa, which increases the substrate specificity of the DppBCDF transporter.

Functionally, part of the ABC transporter DppABCDF involved in the uptake of various di/tripeptides. Prefers dipeptides with acidic residues at the C-terminal end. Efficiently uses tripeptides. This Pseudomonas aeruginosa (strain UCBPP-PA14) protein is Di/tripeptide-binding protein 4.